A 200-amino-acid polypeptide reads, in one-letter code: Large ribosomal subunit protein uL4 (200 aa).

The segment at 38 to 72 (GRQGSKQQKTRSDVSGGGKRPWRQKGTGRARAGTI) is disordered.

Belongs to the universal ribosomal protein uL4 family. In terms of assembly, part of the 50S ribosomal subunit.

Its function is as follows. One of the primary rRNA binding proteins, this protein initially binds near the 5'-end of the 23S rRNA. It is important during the early stages of 50S assembly. It makes multiple contacts with different domains of the 23S rRNA in the assembled 50S subunit and ribosome. Forms part of the polypeptide exit tunnel. The protein is Large ribosomal subunit protein uL4 of Pseudomonas fluorescens (strain ATCC BAA-477 / NRRL B-23932 / Pf-5).